We begin with the raw amino-acid sequence, 1377 residues long: DNA-directed RNA polymerase subunit beta' (1377 aa).

Zn(2+) contacts are provided by C60, C62, C75, and C78. Residues D449, D451, and D453 each contribute to the Mg(2+) site. The Zn(2+) site is built by C777, C851, C858, and C861.

It belongs to the RNA polymerase beta' chain family. The RNAP catalytic core consists of 2 alpha, 1 beta, 1 beta' and 1 omega subunit. When a sigma factor is associated with the core the holoenzyme is formed, which can initiate transcription. The cofactor is Mg(2+). Zn(2+) is required as a cofactor.

It carries out the reaction RNA(n) + a ribonucleoside 5'-triphosphate = RNA(n+1) + diphosphate. In terms of biological role, DNA-dependent RNA polymerase catalyzes the transcription of DNA into RNA using the four ribonucleoside triphosphates as substrates. The sequence is that of DNA-directed RNA polymerase subunit beta' from Borreliella burgdorferi (strain ZS7) (Borrelia burgdorferi).